Consider the following 139-residue polypeptide: Putative pre-16S rRNA nuclease (139 aa).

The protein belongs to the YqgF nuclease family.

The protein localises to the cytoplasm. Functionally, could be a nuclease involved in processing of the 5'-end of pre-16S rRNA. The protein is Putative pre-16S rRNA nuclease of Phocaeicola vulgatus (strain ATCC 8482 / DSM 1447 / JCM 5826 / CCUG 4940 / NBRC 14291 / NCTC 11154) (Bacteroides vulgatus).